The primary structure comprises 172 residues: Adenine phosphoribosyltransferase (172 aa).

The protein belongs to the purine/pyrimidine phosphoribosyltransferase family. As to quaternary structure, homodimer.

The protein localises to the cytoplasm. It carries out the reaction AMP + diphosphate = 5-phospho-alpha-D-ribose 1-diphosphate + adenine. It participates in purine metabolism; AMP biosynthesis via salvage pathway; AMP from adenine: step 1/1. Its function is as follows. Catalyzes a salvage reaction resulting in the formation of AMP, that is energically less costly than de novo synthesis. The polypeptide is Adenine phosphoribosyltransferase (Streptococcus agalactiae serotype III (strain NEM316)).